We begin with the raw amino-acid sequence, 359 residues long: Salicylate carboxymethyltransferase (359 aa).

Position 18 (Tyr-18) interacts with S-adenosyl-L-methionine. Residues Tyr-18, 21-25 (NSFIQ), and Gln-25 contribute to the substrate site. S-adenosyl-L-methionine is bound by residues Gly-59, 59–60 (GC), 59–61 (GCS), Asn-65, 96–99 (LNDL), Asp-98, 129–131 (SFY), and 146–148 (SYS). Substrate is bound by residues 147–151 (YSLMW) and Trp-151. Mg(2+)-binding residues include Asn-162, Asp-248, Phe-250, and Asn-251. Tyr-255 provides a ligand contact to substrate.

The protein belongs to the methyltransferase superfamily. SABATH family.

It carries out the reaction salicylate + S-adenosyl-L-methionine = methyl salicylate + S-adenosyl-L-homocysteine. Functionally, catalyzes the methylation of the free carboxyl end of the plant hormone salicylic acid (SA). Converts SA to SA methyl ester (MSA). The volatile compound MSA is hypothesized to act as an airborne signal that triggers defense responses in uninfected plants. MSA is an important chemoattractant for moth pollinated flowering plants. This is Salicylate carboxymethyltransferase (SAMT) from Clarkia breweri (Fairy fans).